The primary structure comprises 265 residues: Upstream stimulatory factor (265 aa).

The span at 1-18 shows a compositional bias: basic and acidic residues; that stretch reads MDVQDHTLDQGPQDKDKD. Disordered stretches follow at residues 1–21 and 119–149; these read MDVQ…DLEE and ASAA…AAGG. Polar residues predominate over residues 134–144; that stretch reads GEQQPGITQPS. One can recognise a bHLH domain in the interval 190–245; it reads RRRATHNEVERRRRDKINNWIVKLSKIIPDCNIDHSKQGQSKGGILTKTCDYIHDL.

As to quaternary structure, efficient DNA binding requires dimerization with another bHLH protein. Binds DNA as a homodimer or a heterodimer. As to expression, enriched in ectodermal tissue.

The protein localises to the nucleus. May act as a transcription factor which recognizes the CACGTG motif on SPEC gene promoters. The sequence is that of Upstream stimulatory factor from Strongylocentrotus purpuratus (Purple sea urchin).